The chain runs to 725 residues: N-alpha-acetyltransferase 35, NatC auxiliary subunit (725 aa).

Positions 548–573 are disordered; that stretch reads ERIMEEQQKGRSSKKTKKKKKVRPLS. The span at 558 to 571 shows a compositional bias: basic residues; that stretch reads RSSKKTKKKKKVRP.

It belongs to the MAK10 family. In terms of assembly, component of the N-terminal acetyltransferase C (NatC) complex.

The protein localises to the cytoplasm. Functionally, auxillary component of the N-terminal acetyltransferase C (NatC) complex which catalyzes acetylation of N-terminal methionine residues. N-terminal acetylation protects proteins from ubiquitination and degradation by the N-end rule pathway. The protein is N-alpha-acetyltransferase 35, NatC auxiliary subunit (NAA35) of Gallus gallus (Chicken).